Here is a 181-residue protein sequence, read N- to C-terminus: ATP synthase subunit delta (181 aa).

The protein belongs to the ATPase delta chain family. F-type ATPases have 2 components, F(1) - the catalytic core - and F(0) - the membrane proton channel. F(1) has five subunits: alpha(3), beta(3), gamma(1), delta(1), epsilon(1). F(0) has three main subunits: a(1), b(2) and c(10-14). The alpha and beta chains form an alternating ring which encloses part of the gamma chain. F(1) is attached to F(0) by a central stalk formed by the gamma and epsilon chains, while a peripheral stalk is formed by the delta and b chains.

It localises to the cell inner membrane. Its function is as follows. F(1)F(0) ATP synthase produces ATP from ADP in the presence of a proton or sodium gradient. F-type ATPases consist of two structural domains, F(1) containing the extramembraneous catalytic core and F(0) containing the membrane proton channel, linked together by a central stalk and a peripheral stalk. During catalysis, ATP synthesis in the catalytic domain of F(1) is coupled via a rotary mechanism of the central stalk subunits to proton translocation. Functionally, this protein is part of the stalk that links CF(0) to CF(1). It either transmits conformational changes from CF(0) to CF(1) or is implicated in proton conduction. The protein is ATP synthase subunit delta of Chlorobium luteolum (strain DSM 273 / BCRC 81028 / 2530) (Pelodictyon luteolum).